The sequence spans 260 residues: Voltage-dependent calcium channel gamma-6 subunit (260 aa).

The next 4 helical transmembrane spans lie at 43-63 (LLVA…EFWV), 143-163 (VIAV…IMVL), 169-189 (SLLR…FVSL), and 221-241 (LGCG…FLLL).

Belongs to the PMP-22/EMP/MP20 family. CACNG subfamily. Interacts with CACNA1C. Identified in a complex with the L-type calcium channel subunits CACNA1C, CACNA2D1 and either CACNB1 or CACNB2. As to expression, detected in brain and heart (at protein level).

It localises to the cell membrane. Functionally, regulates the activity of L-type calcium channels that contain CACNA1C as pore-forming subunit. In Mus musculus (Mouse), this protein is Voltage-dependent calcium channel gamma-6 subunit (Cacng6).